The following is an 883-amino-acid chain: Phosphoenolpyruvate carboxylase (883 aa).

Residues H138 and K546 contribute to the active site.

This sequence belongs to the PEPCase type 1 family. Mg(2+) serves as cofactor.

The catalysed reaction is oxaloacetate + phosphate = phosphoenolpyruvate + hydrogencarbonate. Forms oxaloacetate, a four-carbon dicarboxylic acid source for the tricarboxylic acid cycle. This is Phosphoenolpyruvate carboxylase from Shigella dysenteriae serotype 1 (strain Sd197).